Consider the following 698-residue polypeptide: Polyribonucleotide nucleotidyltransferase (698 aa).

The Mg(2+) site is built by Asp-490 and Asp-496. Residues 557–616 (PKVVTMTIKPDKIRDVIGPGGKKINEIIDETGVKLDIEQDGTIFIGAVDQAMINRAREII) form the KH domain. One can recognise an S1 motif domain in the interval 626–694 (GQTYQATVKR…KQGRVNASHR (69 aa)).

The protein belongs to the polyribonucleotide nucleotidyltransferase family. The cofactor is Mg(2+).

Its subcellular location is the cytoplasm. The enzyme catalyses RNA(n+1) + phosphate = RNA(n) + a ribonucleoside 5'-diphosphate. In terms of biological role, involved in mRNA degradation. Catalyzes the phosphorolysis of single-stranded polyribonucleotides processively in the 3'- to 5'-direction. The protein is Polyribonucleotide nucleotidyltransferase of Staphylococcus aureus (strain Mu3 / ATCC 700698).